A 162-amino-acid polypeptide reads, in one-letter code: Interleukin-15 (162 aa).

An N-terminal signal peptide occupies residues 1–29; it reads MRISKPHLRSISIQCYLCLLLKSHFLTEA. Residues 30–48 constitute a propeptide that is removed on maturation; that stretch reads GIHVFILGCFSAGLPKTEA. 2 disulfides stabilise this stretch: Cys-83–Cys-133 and Cys-90–Cys-136. N-linked (GlcNAc...) asparagine glycosylation is present at Asn-127.

This sequence belongs to the IL-15/IL-21 family.

The protein resides in the secreted. Its function is as follows. Cytokine that plays a major role in the development of inflammatory and protective immune responses to microbial invaders and parasites by modulating immune cells of both the innate and adaptive immune systems. Stimulates the proliferation of natural killer cells, T-cells and B-cells and promotes the secretion of several cytokines. In monocytes, induces the production of IL8 and monocyte chemotactic protein 1/CCL2, two chemokines that attract neutrophils and monocytes respectively to sites of infection. Unlike most cytokines, which are secreted in soluble form, IL15 is expressed in association with its high affinity IL15RA on the surface of IL15-producing cells and delivers signals to target cells that express IL2RB and IL2RG receptor subunits. Binding to its receptor triggers the phosphorylation of JAK1 and JAK3 and the recruitment and subsequent phosphorylation of signal transducer and activator of transcription-3/STAT3 and STAT5. In mast cells, induces the rapid tyrosine phosphorylation of STAT6 and thereby controls mast cell survival and release of cytokines such as IL4. The polypeptide is Interleukin-15 (IL15) (Chlorocebus aethiops (Green monkey)).